The following is a 722-amino-acid chain: Polyribonucleotide nucleotidyltransferase (722 aa).

Mg(2+) is bound by residues aspartate 487 and aspartate 493. Positions 554 to 613 (PRIETFKIPTDKIREVIGTGGKVIREIVEKTGAKVNIEDDGTVKVASSDGESIKAAIKWI) constitute a KH domain. The 69-residue stretch at 623-691 (GEIYEGTVVK…DRGKTRLSMK (69 aa)) folds into the S1 motif domain. The segment at 697-722 (TGEDLEAKQKAEAKAEGEAPAQAAGE) is disordered. Basic and acidic residues predominate over residues 701-713 (LEAKQKAEAKAEG).

It belongs to the polyribonucleotide nucleotidyltransferase family. The cofactor is Mg(2+).

It localises to the cytoplasm. It catalyses the reaction RNA(n+1) + phosphate = RNA(n) + a ribonucleoside 5'-diphosphate. Its function is as follows. Involved in mRNA degradation. Catalyzes the phosphorolysis of single-stranded polyribonucleotides processively in the 3'- to 5'-direction. This chain is Polyribonucleotide nucleotidyltransferase, found in Rhodopseudomonas palustris (strain ATCC BAA-98 / CGA009).